A 135-amino-acid polypeptide reads, in one-letter code: Fluoride-specific ion channel FluC 1 (135 aa).

4 consecutive transmembrane segments (helical) span residues 7–27 (LAVG…GLVL), 32–52 (GFPY…PFLM), 65–85 (LALA…SFSV), and 96–116 (WSAF…LSLL). 2 residues coordinate Na(+): Gly-75 and Thr-78.

It belongs to the fluoride channel Fluc/FEX (TC 1.A.43) family.

Its subcellular location is the cell membrane. It catalyses the reaction fluoride(in) = fluoride(out). Its activity is regulated as follows. Na(+) is not transported, but it plays an essential structural role and its presence is essential for fluoride channel function. Its function is as follows. Fluoride-specific ion channel. Important for reducing fluoride concentration in the cell, thus reducing its toxicity. The polypeptide is Fluoride-specific ion channel FluC 1 (Latilactobacillus sakei subsp. sakei (strain 23K) (Lactobacillus sakei subsp. sakei)).